A 502-amino-acid polypeptide reads, in one-letter code: Lysine--tRNA ligase (502 aa).

The Mg(2+) site is built by Glu-409 and Glu-416.

The protein belongs to the class-II aminoacyl-tRNA synthetase family. As to quaternary structure, homodimer. Requires Mg(2+) as cofactor.

Its subcellular location is the cytoplasm. It carries out the reaction tRNA(Lys) + L-lysine + ATP = L-lysyl-tRNA(Lys) + AMP + diphosphate. In Shouchella clausii (strain KSM-K16) (Alkalihalobacillus clausii), this protein is Lysine--tRNA ligase.